Reading from the N-terminus, the 211-residue chain is N-(5'-phosphoribosyl)anthranilate isomerase (211 aa).

This sequence belongs to the TrpF family.

The catalysed reaction is N-(5-phospho-beta-D-ribosyl)anthranilate = 1-(2-carboxyphenylamino)-1-deoxy-D-ribulose 5-phosphate. It functions in the pathway amino-acid biosynthesis; L-tryptophan biosynthesis; L-tryptophan from chorismate: step 3/5. This chain is N-(5'-phosphoribosyl)anthranilate isomerase, found in Nitrosomonas europaea (strain ATCC 19718 / CIP 103999 / KCTC 2705 / NBRC 14298).